A 134-amino-acid polypeptide reads, in one-letter code: Methylglyoxal synthase (134 aa).

The region spanning 1-134 (MHIALIAHDE…DWRDLRRNDE (134 aa)) is the MGS-like domain. Residues H8, K12, 34-37 (TGTT), and 54-55 (SG) each bind substrate. D60 functions as the Proton donor/acceptor in the catalytic mechanism. H87 is a binding site for substrate.

It belongs to the methylglyoxal synthase family.

It carries out the reaction dihydroxyacetone phosphate = methylglyoxal + phosphate. Functionally, catalyzes the formation of methylglyoxal from dihydroxyacetone phosphate. The polypeptide is Methylglyoxal synthase (Listeria innocua serovar 6a (strain ATCC BAA-680 / CLIP 11262)).